The sequence spans 603 residues: Polypeptide N-acetylgalactosaminyltransferase 10 (603 aa).

The Cytoplasmic segment spans residues 1 to 11 (MRRKEKRLLQA). Residues 12 to 31 (VALVLAALVLLPNVGLWALY) form a helical; Signal-anchor for type II membrane protein membrane-spanning segment. Residues 32–603 (RERQPDGTPG…STVLEKFNRN (572 aa)) are Lumenal-facing. The segment at 38–59 (GTPGGSGAAVAPAAGQGSHSRQ) is disordered. A compositionally biased stretch (low complexity) spans 45-55 (AAVAPAAGQGS). 2 N-linked (GlcNAc...) asparagine glycosylation sites follow: asparagine 124 and asparagine 146. Disulfide bonds link cysteine 135–cysteine 365, cysteine 356–cysteine 432, cysteine 471–cysteine 488, cysteine 523–cysteine 538, and cysteine 563–cysteine 578. The segment at 144 to 253 (LPNTSIIIPF…VNWLPPLLDR (110 aa)) is catalytic subdomain A. Substrate contacts are provided by histidine 154, glutamate 156, aspartate 185, and arginine 214. Residue aspartate 237 coordinates Mn(2+). A substrate-binding site is contributed by serine 238. Histidine 239 is a Mn(2+) binding site. The interval 311–373 (PFESPVMAGG…PCSRVGHIYR (63 aa)) is catalytic subdomain B. Residue tryptophan 342 coordinates substrate. A Mn(2+)-binding site is contributed by histidine 370. Substrate is bound by residues arginine 373 and tyrosine 378. The segment at 373 to 384 (RKYVPYKVPAGV) is flexible loop. One can recognise a Ricin B-type lectin domain in the interval 458–590 (AAWGEIRNVG…SSLTQQWLFE (133 aa)). Residue asparagine 593 is glycosylated (N-linked (GlcNAc...) asparagine).

The protein belongs to the glycosyltransferase 2 family. GalNAc-T subfamily. Requires Mn(2+) as cofactor. In terms of tissue distribution, widely expressed. Expressed at high level in small intestine, and at intermediate levels in stomach, pancreas, ovary, thyroid gland and spleen. Weakly expressed in other tissues.

The protein localises to the golgi apparatus membrane. It catalyses the reaction L-seryl-[protein] + UDP-N-acetyl-alpha-D-galactosamine = a 3-O-[N-acetyl-alpha-D-galactosaminyl]-L-seryl-[protein] + UDP + H(+). It carries out the reaction L-threonyl-[protein] + UDP-N-acetyl-alpha-D-galactosamine = a 3-O-[N-acetyl-alpha-D-galactosaminyl]-L-threonyl-[protein] + UDP + H(+). The protein operates within protein modification; protein glycosylation. In terms of biological role, catalyzes the initial reaction in O-linked oligosaccharide biosynthesis, the transfer of an N-acetyl-D-galactosamine residue to a serine or threonine residue on the protein receptor. Has activity toward Muc5Ac and EA2 peptide substrates. The protein is Polypeptide N-acetylgalactosaminyltransferase 10 (GALNT10) of Homo sapiens (Human).